A 961-amino-acid polypeptide reads, in one-letter code: MTETTSGPARGSRTKGTKATKGLRIERVHTTPGVHPYDEVVWERRDVVMTNWRDGSVNFEQRGVEFPDFWSVNAVNIVTSKYFRGAVGTPQRETGLKQLIDRIVKTYRKAGEEYKYFASPADAEIFEHELAYALLHQIFSFNSPVWFNVGTPQPQQVSACFILSVDDSMESILDWYKEEGMIFKGGSGAGLNLSRIRSSKELLSSGGNASGPVSFMRGADASAGTIKSGGATRRAAKMVILDVDHPDIEGFIETKVKEEEKIRALRDAGFDMDLGGDDITSVQYQNANNSVRVNDEFMRAVESGSAFGLRARMTGEIIEQVDAKALFRKMAQAAWACADPGIQYDDTINRWHTCPESGRINGSNPCSEYMHLDNTSCNLASLNLMKFLTDDGEGNQSFDVERFAKVVELVITAMDISICFADFPTQKIGENTRAFRQLGIGYANLGALLMATGHAYDSDGGRAIAGAISSLMTGTSYRRSAELAAVVGPYDGYARNAAPHNQVMRQHADANDTAVRMDDLDTPIWAAATETWQDVLRLGEKNGFRNAQASVIAPTGTIGLAMSCDTTGLEPDLALVKFKKLVGGGSMQIVNGTVPQALRRLGYQAEQIEAIVEHIAEHGNVLDAPGLKTEHYKVFDCAMGERSISAMGHVRMMAAIQPWISGALSKTVNMPESATVEEVEEIYFEAWKMGVKALAIYRDNCKVGQPLSAKTKEKEQDGIAEKTEDTIRAAVEKVIEYRPVRKRLPKGRPGITTSFTVGGAEGYMTANSYPDDGLGEVFLKMSKQGSTLAGMMDAFSIAVSVGLQYGVPLETYVSKFTNMRFEPAGMTDDPDVRMAQSIVDNIFRRLALDFLPFETRSALGIHSAEERQRHLDTGSYEQVIEEDELDVEGLAQSAPRQQIPAVPAAPAEIPAPKQAHTSAELVEMQLGISADAPLCFSCGTKMQRAGSCYICEGCGSTSGCS.

Residues 1–23 (MTETTSGPARGSRTKGTKATKGL) form a disordered region. Substrate-binding positions include Ser143, 159–160 (AC), Gly188, 364–368 (NPCSE), and 554–558 (PTGTI). A disulfide bridge links Cys160 with Cys377. Asn364 functions as the Proton acceptor in the catalytic mechanism. The active-site Cysteine radical intermediate is Cys366. Glu368 acts as the Proton acceptor in catalysis.

The protein belongs to the ribonucleoside diphosphate reductase class-2 family. Homotetramer. It depends on adenosylcob(III)alamin as a cofactor.

The enzyme catalyses a 2'-deoxyribonucleoside 5'-diphosphate + [thioredoxin]-disulfide + H2O = a ribonucleoside 5'-diphosphate + [thioredoxin]-dithiol. Functionally, catalyzes the reduction of ribonucleotides to deoxyribonucleotides. May function to provide a pool of deoxyribonucleotide precursors for DNA repair during oxygen limitation and/or for immediate growth after restoration of oxygen. In Streptomyces clavuligerus, this protein is Vitamin B12-dependent ribonucleotide reductase (nrdJ).